A 34-amino-acid chain; its full sequence is MSDIN-like toxin proprotein 4 (34 aa).

The propeptide occupies 1-10 (MSDINATRLP). Residues 11 to 17 (VWIGYSP) constitute a cross-link (cyclopeptide (Val-Pro)). A propeptide spanning residues 18 to 34 (CVGDDCIALLTRGEGLC) is cleaved from the precursor.

It belongs to the MSDIN fungal toxin family. In terms of processing, processed by the macrocyclase-peptidase enzyme POPB to yield a toxic cyclic heptapeptide. POPB first removes 10 residues from the N-terminus. Conformational trapping of the remaining peptide forces the enzyme to release this intermediate rather than proceed to macrocyclization. The enzyme rebinds the remaining peptide in a different conformation and catalyzes macrocyclization of the N-terminal 7 residues. Expressed in basidiocarps.

Functionally, probable toxin that belongs to the MSDIN-like toxin family responsible for a large number of food poisoning cases and deaths. In Amanita exitialis (Guangzhou destroying angel), this protein is MSDIN-like toxin proprotein 4.